The sequence spans 155 residues: SsrA-binding protein (155 aa).

It belongs to the SmpB family.

Its subcellular location is the cytoplasm. Required for rescue of stalled ribosomes mediated by trans-translation. Binds to transfer-messenger RNA (tmRNA), required for stable association of tmRNA with ribosomes. tmRNA and SmpB together mimic tRNA shape, replacing the anticodon stem-loop with SmpB. tmRNA is encoded by the ssrA gene; the 2 termini fold to resemble tRNA(Ala) and it encodes a 'tag peptide', a short internal open reading frame. During trans-translation Ala-aminoacylated tmRNA acts like a tRNA, entering the A-site of stalled ribosomes, displacing the stalled mRNA. The ribosome then switches to translate the ORF on the tmRNA; the nascent peptide is terminated with the 'tag peptide' encoded by the tmRNA and targeted for degradation. The ribosome is freed to recommence translation, which seems to be the essential function of trans-translation. The polypeptide is SsrA-binding protein (Lactococcus lactis subsp. lactis (strain IL1403) (Streptococcus lactis)).